A 237-amino-acid polypeptide reads, in one-letter code: MRPSNRTPAQTRPITITRQFTAHAEGSVLVEFGETKVLCTASFTEGVPRFLKGQGQGWVTAEYGMLPRSTHSRMDREAARGKQSGRTQEIQRLIGRALRACVDMKALGENTIVIDCDVIQADGGTRTASITGACVALVDALNWARGKGIIKSNPLKFLIAAVSVGIYKGEAISDLEYIEDSAAETDMNVVMTETGKIIEIQGTAEGEPFTHEELIELLGLAKNSIREIVDVQKAALN.

Phosphate is bound by residues Arg86 and 124–126 (GTR).

The protein belongs to the RNase PH family. As to quaternary structure, homohexameric ring arranged as a trimer of dimers.

It carries out the reaction tRNA(n+1) + phosphate = tRNA(n) + a ribonucleoside 5'-diphosphate. Functionally, phosphorolytic 3'-5' exoribonuclease that plays an important role in tRNA 3'-end maturation. Removes nucleotide residues following the 3'-CCA terminus of tRNAs; can also add nucleotides to the ends of RNA molecules by using nucleoside diphosphates as substrates, but this may not be physiologically important. Probably plays a role in initiation of 16S rRNA degradation (leading to ribosome degradation) during starvation. This is Ribonuclease PH from Shewanella sp. (strain W3-18-1).